The primary structure comprises 201 residues: Small ribosomal subunit protein uS4 (201 aa).

Positions 91-155 (TRLDNVVYRA…STLPFQVARE (65 aa)) constitute an S4 RNA-binding domain.

Belongs to the universal ribosomal protein uS4 family. Part of the 30S ribosomal subunit. Contacts protein S5. The interaction surface between S4 and S5 is involved in control of translational fidelity.

Functionally, one of the primary rRNA binding proteins, it binds directly to 16S rRNA where it nucleates assembly of the body of the 30S subunit. In terms of biological role, with S5 and S12 plays an important role in translational accuracy. The polypeptide is Small ribosomal subunit protein uS4 (Nocardia farcinica (strain IFM 10152)).